Here is a 257-residue protein sequence, read N- to C-terminus: Hydroxyacylglutathione hydrolase (257 aa).

Residues histidine 54, histidine 56, aspartate 58, histidine 59, histidine 113, aspartate 137, and histidine 175 each coordinate Zn(2+).

This sequence belongs to the metallo-beta-lactamase superfamily. Glyoxalase II family. As to quaternary structure, monomer. Zn(2+) is required as a cofactor.

The enzyme catalyses an S-(2-hydroxyacyl)glutathione + H2O = a 2-hydroxy carboxylate + glutathione + H(+). It functions in the pathway secondary metabolite metabolism; methylglyoxal degradation; (R)-lactate from methylglyoxal: step 2/2. In terms of biological role, thiolesterase that catalyzes the hydrolysis of S-D-lactoyl-glutathione to form glutathione and D-lactic acid. This chain is Hydroxyacylglutathione hydrolase, found in Crocosphaera subtropica (strain ATCC 51142 / BH68) (Cyanothece sp. (strain ATCC 51142)).